Here is a 152-residue protein sequence, read N- to C-terminus: MSHHVYELPIDVSQIQTLLPHRYPFLLVDRILELDLETKWIVAQKNVSINEPFFQGHFPNRPVMPGVLIIEALAQVGGVMTQLGLGRDALSQLFYMVKVDKARFNKQVVPGDVLIMEVQMKRLIRNVGCFYGEAKVDGEVVASAEVMCAGAR.

H57 is an active-site residue.

The protein belongs to the thioester dehydratase family. FabZ subfamily.

The protein resides in the cytoplasm. The enzyme catalyses a (3R)-hydroxyacyl-[ACP] = a (2E)-enoyl-[ACP] + H2O. In terms of biological role, involved in unsaturated fatty acids biosynthesis. Catalyzes the dehydration of short chain beta-hydroxyacyl-ACPs and long chain saturated and unsaturated beta-hydroxyacyl-ACPs. The polypeptide is 3-hydroxyacyl-[acyl-carrier-protein] dehydratase FabZ (Xanthomonas axonopodis pv. citri (strain 306)).